A 290-amino-acid polypeptide reads, in one-letter code: MHALNLQPKTITLAERLADLAVDALIDEADLSPKPALVDRRGNGAHTDLHLGLMHASALALWPAFKEMAEAALEFGEIGLPLREAIGRIGREGEQAMLATTHGVNTHRGAIWALGLLVTAAALDTKSTSAGAVTLRAARLALLDDRYAPRPLSHGAQVAQRYGARGAREEAQLGFPSVVQRGLPQLKRSRAAGHGEQNARLDALLAIMTDLADTCVLYRAGEQGLHAMQHGARAVLDAGGSASLTGRRRLHELDQQLIALNASPGGAADLLAASLLLDRIERDGILQGAF.

It belongs to the CitG/MdcB family.

It carries out the reaction 3'-dephospho-CoA + ATP = 2'-(5''-triphospho-alpha-D-ribosyl)-3'-dephospho-CoA + adenine. Its function is as follows. Involved in the formation of 2-(5''-phosphoribosyl)-3'-dephosphocoenzyme-A, the prosthetic group of the acyl-carrier protein of the malonate decarboxylase. The sequence is that of Probable 2-(5''-triphosphoribosyl)-3'-dephosphocoenzyme-A synthase from Pseudomonas fluorescens (strain Pf0-1).